The primary structure comprises 323 residues: Aldo-keto reductase family 1 member C1 (323 aa).

NADP(+) contacts are provided by residues 20–24 (GFGTY) and aspartate 50. Substrate is bound at residue tyrosine 24. The Proton donor role is filled by tyrosine 55. Histidine 117 is a binding site for substrate. Residues 166-167 (SN), glutamine 190, and 216-222 (YSALGSH) each bind NADP(+). Substrate-binding residues include histidine 222 and tryptophan 227. An NADP(+)-binding site is contributed by 270 to 280 (KSYNEQRIREN).

Belongs to the aldo/keto reductase family. Monomer. In terms of tissue distribution, expressed in liver, adrenal gland, intestine and kidney.

It localises to the cytoplasm. It is found in the cytosol. The enzyme catalyses a 3alpha-hydroxysteroid + NADP(+) = a 3-oxosteroid + NADPH + H(+). The catalysed reaction is a 3alpha-hydroxysteroid + NAD(+) = a 3-oxosteroid + NADH + H(+). It carries out the reaction (17R,20S)-17,20-dihydroxypregn-4-en-3-one + NADP(+) = 17alpha-hydroxyprogesterone + NADPH + H(+). It catalyses the reaction (17R,20S)-17,20-dihydroxypregn-4-en-3-one + NAD(+) = 17alpha-hydroxyprogesterone + NADH + H(+). The enzyme catalyses (20S)-hydroxypregn-4-en-3-one + NADP(+) = progesterone + NADPH + H(+). The catalysed reaction is (20S)-hydroxypregn-4-en-3-one + NAD(+) = progesterone + NADH + H(+). It carries out the reaction (1R,2R)-1,2-dihydrobenzene-1,2-diol + NADP(+) = catechol + NADPH + H(+). It catalyses the reaction (S)-indan-1-ol + NAD(+) = indan-1-one + NADH + H(+). The enzyme catalyses (S)-indan-1-ol + NADP(+) = indan-1-one + NADPH + H(+). The catalysed reaction is 5alpha-androstane-3alpha,17beta-diol + NADP(+) = 17beta-hydroxy-5alpha-androstan-3-one + NADPH + H(+). It carries out the reaction 5alpha-androstane-3beta,17beta-diol + NADP(+) = 17beta-hydroxy-5alpha-androstan-3-one + NADPH + H(+). It catalyses the reaction 5alpha-androstane-3alpha,17beta-diol + NAD(+) = 17beta-hydroxy-5alpha-androstan-3-one + NADH + H(+). The enzyme catalyses 17beta-hydroxy-5alpha-androstan-3-one + NADP(+) = 5alpha-androstan-3,17-dione + NADPH + H(+). The catalysed reaction is androsterone + NADP(+) = 5alpha-androstan-3,17-dione + NADPH + H(+). It carries out the reaction androsterone + NADPH + H(+) = 5alpha-androstane-3alpha,17beta-diol + NADP(+). It catalyses the reaction 5alpha-androstane-3alpha,17beta-diol + NAD(+) = androsterone + NADH + H(+). The enzyme catalyses 17beta-estradiol + NADP(+) = estrone + NADPH + H(+). The catalysed reaction is 17beta-estradiol + NAD(+) = estrone + NADH + H(+). It carries out the reaction testosterone + NADP(+) = androst-4-ene-3,17-dione + NADPH + H(+). It catalyses the reaction 20alpha-hydroxy-5beta-pregnan-3-one + NADP(+) = 5beta-pregnan-3,20-dione + NADPH + H(+). The enzyme catalyses 3beta-hydroxy-5beta-pregnane-20-one + NADP(+) = 5beta-pregnan-3,20-dione + NADPH + H(+). The catalysed reaction is 3beta-hydroxy-5beta-pregnane-20-one + NADPH + H(+) = 3beta,20alpha-dihydroxy-5beta-pregnane + NADP(+). It carries out the reaction (3beta,5alpha,17beta)-3-hydroxyandrostan-17-yl sulfate + NADP(+) = 5alpha-dihydrotestosterone sulfate + NADPH + H(+). The protein operates within steroid metabolism. Cytosolic aldo-keto reductase that catalyzes the NADH and NADPH-dependent reduction of ketosteroids to hydroxysteroids. Most probably acts as a reductase in vivo since the oxidase activity measured in vitro is inhibited by physiological concentrations of NADPH. Displays a broad positional specificity acting on positions 3, 17 and 20 of steroids and regulates the metabolism of hormones like estrogens and androgens. May also reduce conjugated steroids such as 5alpha-dihydrotestosterone sulfate. Displays affinity for bile acids. The polypeptide is Aldo-keto reductase family 1 member C1 (AKR1C1) (Macaca fuscata fuscata (Japanese macaque)).